Here is a 322-residue protein sequence, read N- to C-terminus: Endochitinase (322 aa).

The signal sequence occupies residues 1–21 (MKMRYCVLVSVLAILVIRGSA). Residues 22–62 (ENCGRQAGGALCPGGQCCSKWGWCGTTPDHCGTDCQSQCGG) form the Chitin-binding type-1 domain. 4 disulfide bridges follow: C24/C39, C33/C45, C38/C52, and C56/C60.

It belongs to the glycosyl hydrolase 19 family. Chitinase class I subfamily.

It carries out the reaction Random endo-hydrolysis of N-acetyl-beta-D-glucosaminide (1-&gt;4)-beta-linkages in chitin and chitodextrins.. Functionally, defense against chitin-containing fungal pathogens. The chain is Endochitinase from Actinidia chinensis var. chinensis (Chinese soft-hair kiwi).